The following is a 471-amino-acid chain: Probable ribonuclease FAU-1 (471 aa).

This sequence belongs to the FAU-1 family.

Functionally, probable RNase involved in rRNA stability through maturation and/or degradation of precursor rRNAs. Preferentially cleaves UA sequences in the 5' precursor region of 5S rRNA. Binds to RNA in loop regions with AU-rich sequences. The polypeptide is Probable ribonuclease FAU-1 (Thermococcus kodakarensis (strain ATCC BAA-918 / JCM 12380 / KOD1) (Pyrococcus kodakaraensis (strain KOD1))).